The sequence spans 932 residues: Calpain-like protease palB/cpr-8 (932 aa).

A Calpain catalytic domain is found at K96–P419. Catalysis depends on residues C178, H346, and N366. Residues Q890 to D932 are disordered. Residues G902–V911 are compositionally biased toward gly residues.

The protein belongs to the peptidase C2 family. PalB/RIM13 subfamily.

In terms of biological role, required for the proteolytic cleavage of the transcription factor pacc-1 in response to alkaline ambient pH. This chain is Calpain-like protease palB/cpr-8 (cpr-8), found in Neurospora crassa (strain ATCC 24698 / 74-OR23-1A / CBS 708.71 / DSM 1257 / FGSC 987).